Consider the following 475-residue polypeptide: Sulfate adenylyltransferase subunit 1 (475 aa).

Residues 25–239 (KSLLRFLTCG…EVLETVEIQR (215 aa)) form the tr-type G domain. The interval 34-41 (GSVDDGKS) is G1. 34-41 (GSVDDGKS) contacts GTP. The G2 stretch occupies residues 92–96 (GITID). The interval 113-116 (DTPG) is G3. GTP contacts are provided by residues 113–117 (DTPGH) and 168–171 (NKMD). Residues 168–171 (NKMD) form a G4 region. The interval 206-208 (SAL) is G5.

The protein belongs to the TRAFAC class translation factor GTPase superfamily. Classic translation factor GTPase family. CysN/NodQ subfamily. Heterodimer composed of CysD, the smaller subunit, and CysN.

The catalysed reaction is sulfate + ATP + H(+) = adenosine 5'-phosphosulfate + diphosphate. It functions in the pathway sulfur metabolism; hydrogen sulfide biosynthesis; sulfite from sulfate: step 1/3. With CysD forms the ATP sulfurylase (ATPS) that catalyzes the adenylation of sulfate producing adenosine 5'-phosphosulfate (APS) and diphosphate, the first enzymatic step in sulfur assimilation pathway. APS synthesis involves the formation of a high-energy phosphoric-sulfuric acid anhydride bond driven by GTP hydrolysis by CysN coupled to ATP hydrolysis by CysD. The polypeptide is Sulfate adenylyltransferase subunit 1 (Escherichia coli O157:H7).